The sequence spans 378 residues: MTDSPVLALAKDLISRQSVTPEDAGCQDVMIERLKALGFEIEVMVFEDTTNFWARRGTEAPLFAFAGHTDVVPAGKLEQWDTHPFEPTIIDGYLHGRGAADMKGSLACMVVAVERFIAENPDHKGSIGFLITSDEEGPFINGTVRVVETLMDRGENIDMCIVGEPSSTEVVGDVVKNGRRGSITGDLTVKGTQGHVAYPHLANNPVHQSLMAIHELATTEWDQGNDYFPPTSFQIPNVSAGTGASNVIPGEFNVQFNLRFSTELSNEVIVQRITETLDKHELDYDLKWTFNGDPFLTDTGALLDAVVAAVDEVNSTKPALLTTGGTSDGRFIARMGGQVVELGPVNATIHKVNECVKVDDLEKLTDMYENTLKHLLAK.

Position 68 (histidine 68) interacts with Zn(2+). The active site involves aspartate 70. A Zn(2+)-binding site is contributed by aspartate 101. The Proton acceptor role is filled by glutamate 135. Zn(2+) is bound by residues glutamate 136, glutamate 164, and histidine 350.

The protein belongs to the peptidase M20A family. DapE subfamily. In terms of assembly, homodimer. The cofactor is Zn(2+). Co(2+) serves as cofactor.

The enzyme catalyses N-succinyl-(2S,6S)-2,6-diaminopimelate + H2O = (2S,6S)-2,6-diaminopimelate + succinate. The protein operates within amino-acid biosynthesis; L-lysine biosynthesis via DAP pathway; LL-2,6-diaminopimelate from (S)-tetrahydrodipicolinate (succinylase route): step 3/3. Catalyzes the hydrolysis of N-succinyl-L,L-diaminopimelic acid (SDAP), forming succinate and LL-2,6-diaminopimelate (DAP), an intermediate involved in the bacterial biosynthesis of lysine and meso-diaminopimelic acid, an essential component of bacterial cell walls. This is Succinyl-diaminopimelate desuccinylase from Vibrio campbellii (strain ATCC BAA-1116).